The following is a 405-amino-acid chain: Phosphopentomutase (405 aa).

Mn(2+) is bound by residues Asp-10, Asp-305, His-310, Asp-346, His-347, and His-358.

This sequence belongs to the phosphopentomutase family. It depends on Mn(2+) as a cofactor.

It localises to the cytoplasm. The catalysed reaction is 2-deoxy-alpha-D-ribose 1-phosphate = 2-deoxy-D-ribose 5-phosphate. It catalyses the reaction alpha-D-ribose 1-phosphate = D-ribose 5-phosphate. It functions in the pathway carbohydrate degradation; 2-deoxy-D-ribose 1-phosphate degradation; D-glyceraldehyde 3-phosphate and acetaldehyde from 2-deoxy-alpha-D-ribose 1-phosphate: step 1/2. In terms of biological role, isomerase that catalyzes the conversion of deoxy-ribose 1-phosphate (dRib-1-P) and ribose 1-phosphate (Rib-1-P) to deoxy-ribose 5-phosphate (dRib-5-P) and ribose 5-phosphate (Rib-5-P), respectively. This chain is Phosphopentomutase, found in Methylorubrum extorquens (strain CM4 / NCIMB 13688) (Methylobacterium extorquens).